The following is a 240-amino-acid chain: RNA polymerase sigma factor SigI (240 aa).

The Polymerase core binding motif lies at 56 to 69 (DEYSIGLFAFNEAI). Residues 194 to 213 (LKHIEPRVRVSRKTLERHRK) constitute a DNA-binding region (H-T-H motif).

This sequence belongs to the sigma-70 factor family. SigI subfamily. As to quaternary structure, interacts with RsgI.

It is found in the cytoplasm. Negatively regulated by the anti-sigma-I factor RsgI. Its function is as follows. Sigma factors are initiation factors that promote the attachment of RNA polymerase to specific initiation sites and are then released. This sigma factor contributes to both stress response and virulence gene expression. This Bacillus anthracis protein is RNA polymerase sigma factor SigI.